The chain runs to 771 residues: Kinase suppressor of Ras A (771 aa).

Positions 152 to 169 (SRTSSGSTDEPSGQSTPA) are enriched in polar residues. Residues 152-172 (SRTSSGSTDEPSGQSTPAIVT) form a disordered region. The segment at 215–269 (PHKWHRSTKFRFSGDAVCHFCQRPLGFGFLNAWEKCRSCKWKVHTQCKGRVGDSC) adopts a Phorbol-ester/DAG-type zinc-finger fold. Disordered regions lie at residues 290–339 (GMWK…ISGN) and 414–433 (DSTG…EAVD). The span at 318-331 (SSSSTNSSAPSTPA) shows a compositional bias: low complexity. The 272-residue stretch at 477 to 748 (DKQAPIIGRG…TDINLKLTAL (272 aa)) folds into the Protein kinase domain. ATP is bound by residues 483-491 (IGRGRFGKV) and K503. The active-site Proton acceptor is the D600.

This sequence belongs to the protein kinase superfamily. TKL Ser/Thr protein kinase family. In terms of assembly, interacts with mek-2. It depends on Mg(2+) as a cofactor.

The catalysed reaction is L-seryl-[protein] + ATP = O-phospho-L-seryl-[protein] + ADP + H(+). The enzyme catalyses L-threonyl-[protein] + ATP = O-phospho-L-threonyl-[protein] + ADP + H(+). Its function is as follows. Serine/threonine-protein kinase which positively regulates Ras-mediated signaling probably acting at the level of let-60/ras or/and lin-45/raf. Involved in sex myoblast migration. Plays a role in responses to M.nematophilum-mediated bacterial infection by promoting tail swelling and preventing constipation. Functions redundantly with ksr-2 in the Ras-mediated regulation of larval survival, the development of excretory canal and in mpk-1 phosphorylation in somatic cells. In addition, involved in determining vulval precursor cell fate during vulval induction independently of its kinase activity. Plays a role in egg-laying. This chain is Kinase suppressor of Ras A, found in Caenorhabditis elegans.